A 231-amino-acid chain; its full sequence is Cytidylate kinase (231 aa).

12–20 (GPSGAGKGT) serves as a coordination point for ATP.

It belongs to the cytidylate kinase family. Type 1 subfamily.

The protein localises to the cytoplasm. It carries out the reaction CMP + ATP = CDP + ADP. The enzyme catalyses dCMP + ATP = dCDP + ADP. This is Cytidylate kinase from Shewanella amazonensis (strain ATCC BAA-1098 / SB2B).